The chain runs to 237 residues: MYEVDHADVYDLFYLGRGKDYAAEASDIADLVRSRTPEASSLLDVACGTGTHLEHFTKEFGDTAGLELSEDMLTHARKRLPDATLHQGDMRDFRLGRKFSAVVSMFSSVGYLKTTEELGAAVASFAEHLEPGGVVVVEPWWFPETFADGWVSADVVRRDGRTVARVSHSVREGNATRMEVHFTVADPGKGVRHFSDVHLITLFHQAEYEAAFTAAGLRVEYLEGGPSGRGLFVGVPA.

Y14 and R17 together coordinate substrate. S-adenosyl-L-methionine-binding positions include Y21, A46, E67, 89-90, and M105; that span reads DM. Substrate contacts are provided by residues 145–147, S152, 165–169, and R229; these read TFA and RVSHS.

This sequence belongs to the methyltransferase TylM1/DesVI family. In terms of assembly, homodimer.

The catalysed reaction is dTDP-3-amino-3,4,6-trideoxy-alpha-D-glucose + 2 S-adenosyl-L-methionine = dTDP-alpha-D-desosamine + 2 S-adenosyl-L-homocysteine + 2 H(+). The protein operates within antibiotic biosynthesis. S-adenosyl-L-methionine-dependent methyltransferase involved in the biosynthesis of desosamine, found in certain macrolide antibiotics such as erthyromycin, azithromycin, clarithromycin, and methymycin. Catalyzes the last step in the biosynthesis of dTDP-desosamine, i.e. the N,N-dimethylation of the 3-amino group of dTDP-3-amino-3,4,6-trideoxy-alpha-D-glucose. The polypeptide is dTDP-3-amino-3,4,6-trideoxy-alpha-D-glucopyranose N,N-dimethyltransferase (Streptomyces venezuelae).